A 191-amino-acid chain; its full sequence is MFSAQHKIHKEKGVELSELDEQVAQAFFDLENTNQELKSELKDLYVNSAVQVDISGGRKAIVVNVPYRLRKAYRKIHVRLVRELEKKFSGKDVILIATRRIVRPPKKGSAAKRPRNRTLTSVHEAILDDVVLPAEIVGKRTRYRLDGTKIMKVFLDPKERNNTEYKVEAFSAVYKKLTGKDVVFEFPITEA.

Methionine 1 carries the N-acetylmethionine modification. Residues 15–50 (ELSELDEQVAQAFFDLENTNQELKSELKDLYVNSAV) are a coiled coil.

The protein belongs to the eukaryotic ribosomal protein eS7 family.

This chain is Small ribosomal subunit protein eS7z (RPS7A), found in Arabidopsis thaliana (Mouse-ear cress).